We begin with the raw amino-acid sequence, 92 residues long: UPF0213 protein MGAS9429_Spy1198 (92 aa).

Residues 4-80 (KKAYMYVLEC…KRKTRSQKLA (77 aa)) enclose the GIY-YIG domain.

This sequence belongs to the UPF0213 family.

The polypeptide is UPF0213 protein MGAS9429_Spy1198 (Streptococcus pyogenes serotype M12 (strain MGAS9429)).